The following is a 1939-amino-acid chain: Myosin-4 (1939 aa).

One can recognise a Myosin N-terminal SH3-like domain in the interval 33–82 (DAKTSVFVVDPKESYVKAIVQSREGGKVTAKTEAGATVTVKEDQVFSMNP). T64 and T69 each carry phosphothreonine. A Phosphoserine modification is found at S79. The Myosin motor domain occupies 86-782 (DKIEDMAMMT…LLGTLEEMRD (697 aa)). An N6,N6,N6-trimethyllysine modification is found at K130. 179–186 (GESGAGKT) provides a ligand contact to ATP. Residue Y389 is modified to Phosphotyrosine. T391 carries the phosphothreonine modification. At S392 the chain carries Phosphoserine. T419 is subject to Phosphothreonine. Phosphotyrosine is present on Y424. S625 carries the phosphoserine modification. Positions 659-681 (LNKLMTNLRSTHPHFVRCIIPNE) are actin-binding. The residue at position 757 (H757) is a Pros-methylhistidine. Positions 761-775 (KFGHTKVFFKAGLLG) are actin-binding. At T776 the chain carries Phosphothreonine. Residues 785-814 (LAQLITRTQAICRGFLMRVEFRKMMERRES) enclose the IQ domain. The stretch at 843 to 1939 (LLKSAETEKE…EVHTKVISEE (1097 aa)) forms a coiled coil. Phosphoserine is present on residues S1092, S1162, and S1237. Phosphothreonine is present on T1241. A Phosphoserine modification is found at S1243. T1255 carries the post-translational modification Phosphothreonine. A Phosphoserine modification is found at S1261. The residue at position 1265 (T1265) is a Phosphothreonine. S1278 is modified (phosphoserine). A Phosphothreonine modification is found at T1286. S1288, S1292, S1303, S1306, and S1413 each carry phosphoserine. The residue at position 1464 (Y1464) is a Phosphotyrosine. T1467 is modified (phosphothreonine). S1474 carries the post-translational modification Phosphoserine. Y1492 is subject to Phosphotyrosine. S1495 is modified (phosphoserine). Phosphothreonine is present on T1501. Residue S1514 is modified to Phosphoserine. At T1517 the chain carries Phosphothreonine. 8 positions are modified to phosphoserine: S1542, S1547, S1554, S1574, S1600, S1603, S1714, and S1726. A phosphothreonine mark is found at T1730 and T1736. Residue S1739 is modified to Phosphoserine.

This sequence belongs to the TRAFAC class myosin-kinesin ATPase superfamily. Myosin family. In terms of assembly, muscle myosin is a hexameric protein that consists of 2 heavy chain subunits (MHC), 2 alkali light chain subunits (MLC) and 2 regulatory light chain subunits (MLC-2).

It localises to the cytoplasm. Its subcellular location is the myofibril. Functionally, muscle contraction. This Homo sapiens (Human) protein is Myosin-4 (MYH4).